The following is a 421-amino-acid chain: Leucine-rich repeat-containing protein 42 (421 aa).

LRR repeat units lie at residues 149–170 (VLCS…EEIK), 174–195 (ELTR…LEHL), 202–222 (SVTQ…RKMT), 234–255 (NLAL…GYLF), and 259–280 (KLNC…KDKL). Residues 376–406 (PLLSQESKKSKKRAFKESEQEQSSPQSAKQK) are disordered. The segment covering 396-406 (EQSSPQSAKQK) has biased composition (low complexity). Residue Ser-399 is modified to Phosphoserine.

It belongs to the LRRC42 family.

The chain is Leucine-rich repeat-containing protein 42 (Lrrc42) from Mus musculus (Mouse).